The primary structure comprises 480 residues: Beta-glucosidase A (480 aa).

Residue glutamate 177 is the Proton donor of the active site. Glutamate 378 acts as the Nucleophile in catalysis.

Belongs to the glycosyl hydrolase 1 family.

The enzyme catalyses Hydrolysis of terminal, non-reducing beta-D-glucosyl residues with release of beta-D-glucose.. The polypeptide is Beta-glucosidase A (bglA) (Enterobacter agglomerans (Erwinia herbicola)).